We begin with the raw amino-acid sequence, 415 residues long: Extracellular signal-regulated kinase 1 (415 aa).

The Protein kinase domain maps to 66-369 (YQILEIVGEG…VEDALKHPYL (304 aa)). ATP contacts are provided by residues 72 to 80 (VGEGAYGIV) and Lys-95. The active-site Proton acceptor is the Asp-190. At Thr-226 the chain carries Phosphothreonine. Positions 226–228 (TEY) match the TXY motif. Tyr-228 bears the Phosphotyrosine mark.

It belongs to the protein kinase superfamily. CMGC Ser/Thr protein kinase family. MAP kinase subfamily. Mg(2+) is required as a cofactor. Post-translationally, dually phosphorylated on Thr-226 and Tyr-228, which activates the enzyme.

It carries out the reaction L-seryl-[protein] + ATP = O-phospho-L-seryl-[protein] + ADP + H(+). The enzyme catalyses L-threonyl-[protein] + ATP = O-phospho-L-threonyl-[protein] + ADP + H(+). With respect to regulation, activated by tyrosine and threonine phosphorylation. In Candida albicans (strain WO-1) (Yeast), this protein is Extracellular signal-regulated kinase 1 (CEK1).